The chain runs to 326 residues: Virulence factor CaO19.6688 (326 aa).

Disordered stretches follow at residues 19 to 91, 112 to 137, 161 to 184, 222 to 245, and 276 to 326; these read FNSL…KLPS, EEDN…GTTK, NTTI…PSFP, NVGQ…NDLL, and YEYG…PKIK. 3 stretches are compositionally biased toward low complexity: residues 21–42, 53–78, and 117–137; these read SLKS…SSSS, NRNT…NTTP, and EQQL…GTTK.

In terms of biological role, virulence factor involved in pathogen-host interaction. Modulates host pro-inflammatory cytokine interleukin-1 beta (IL1B) expression. This Candida albicans (strain SC5314 / ATCC MYA-2876) (Yeast) protein is Virulence factor CaO19.6688.